A 415-amino-acid polypeptide reads, in one-letter code: Gamma-glutamyl phosphate reductase (415 aa).

It belongs to the gamma-glutamyl phosphate reductase family.

The protein localises to the cytoplasm. The catalysed reaction is L-glutamate 5-semialdehyde + phosphate + NADP(+) = L-glutamyl 5-phosphate + NADPH + H(+). The protein operates within amino-acid biosynthesis; L-proline biosynthesis; L-glutamate 5-semialdehyde from L-glutamate: step 2/2. Catalyzes the NADPH-dependent reduction of L-glutamate 5-phosphate into L-glutamate 5-semialdehyde and phosphate. The product spontaneously undergoes cyclization to form 1-pyrroline-5-carboxylate. The sequence is that of Gamma-glutamyl phosphate reductase from Ligilactobacillus salivarius (strain UCC118) (Lactobacillus salivarius).